Consider the following 311-residue polypeptide: Malate dehydrogenase (311 aa).

NAD(+)-binding positions include 7 to 13 and Asp-34; that span reads GAAGGIG. Arg-81 and Arg-87 together coordinate substrate. NAD(+) contacts are provided by residues Asn-94 and 117 to 119; that span reads ITN. Substrate is bound by residues Asn-119 and Arg-153. The Proton acceptor role is filled by His-177. Met-227 contacts NAD(+).

It belongs to the LDH/MDH superfamily. MDH type 1 family. In terms of assembly, homodimer.

It catalyses the reaction (S)-malate + NAD(+) = oxaloacetate + NADH + H(+). In terms of biological role, catalyzes the reversible oxidation of malate to oxaloacetate. In Shewanella sp. (strain MR-4), this protein is Malate dehydrogenase.